A 544-amino-acid polypeptide reads, in one-letter code: Histone-arginine methyltransferase CARMER (544 aa).

The region spanning 150–459 (ASQYFQFYGY…QSYDVTIDLH (310 aa)) is the SAM-dependent MTase PRMT-type domain. Residues Gln163, Arg172, Gly196, Glu218, Glu247, and Thr275 each coordinate S-adenosyl-L-methionine. A compositionally biased stretch (polar residues) spans 505 to 520 (DTQQQQQGSRNSNSML). Residues 505-527 (DTQQQQQGSRNSNSMLNGGLSVN) form a disordered region. Arg514 is modified (asymmetric dimethylarginine; by autocatalysis).

It belongs to the class I-like SAM-binding methyltransferase superfamily. Protein arginine N-methyltransferase family. As to quaternary structure, homodimer. In terms of processing, the dimethylated protein is the major form.

The protein resides in the cytoplasm. The protein localises to the nucleus. It catalyses the reaction L-arginyl-[protein] + 2 S-adenosyl-L-methionine = N(omega),N(omega)-dimethyl-L-arginyl-[protein] + 2 S-adenosyl-L-homocysteine + 2 H(+). Methylates (mono- and asymmetric dimethylation) the guanidino nitrogens of arginyl residues in proteins. May methylate histone H3 at 'Arg-17' and activate transcription via chromatin remodeling. The chain is Histone-arginine methyltransferase CARMER (Art4) from Drosophila grimshawi (Hawaiian fruit fly).